A 201-amino-acid chain; its full sequence is Troponin I (201 aa).

Position 1 is an N-acetylalanine (Ala-1). The segment covering 1–33 (ADKAKAAEEAKKKQDDIDRKKAEVRKRLEEQSL) has biased composition (basic and acidic residues). Residues 1 to 45 (ADKAKAAEEAKKKQDDIDRKKAEVRKRLEEQSLKKQKKGFMTPER) are disordered. The troponin T-interaction stretch occupies residues 108–117 (IESDKYDVEL). Positions 135 to 148 (DLRGKFIKPTLKKV) are actin-binding. 2 positions are modified to N6,N6,N6-trimethyllysine: Lys-142 and Lys-146. The interval 182 to 201 (EDDKGATEGDGPAAEEVAAE) is disordered.

It belongs to the troponin I family.

Troponin I is the actomyosin ATPase inhibitory subunit present in the thin filament regulatory complex. In Astacus leptodactylus (Turkish narrow-clawed crayfish), this protein is Troponin I.